A 447-amino-acid polypeptide reads, in one-letter code: Probable glycine dehydrogenase (decarboxylating) subunit 1 (447 aa).

This sequence belongs to the GcvP family. N-terminal subunit subfamily. The glycine cleavage system is composed of four proteins: P, T, L and H. In this organism, the P 'protein' is a heterodimer of two subunits.

It catalyses the reaction N(6)-[(R)-lipoyl]-L-lysyl-[glycine-cleavage complex H protein] + glycine + H(+) = N(6)-[(R)-S(8)-aminomethyldihydrolipoyl]-L-lysyl-[glycine-cleavage complex H protein] + CO2. The glycine cleavage system catalyzes the degradation of glycine. The P protein binds the alpha-amino group of glycine through its pyridoxal phosphate cofactor; CO(2) is released and the remaining methylamine moiety is then transferred to the lipoamide cofactor of the H protein. This is Probable glycine dehydrogenase (decarboxylating) subunit 1 from Bacillus cereus (strain ATCC 10987 / NRS 248).